The sequence spans 794 residues: 6-hydroxypseudooxynicotine dehydrogenase complex subunit gamma (794 aa).

As to quaternary structure, heterohexamer of 2 alpha (kdhA), 2 beta (kdhB) and 2 gamma (kdhC) subunit. Dimer of heterotrimers. Requires Mo-molybdopterin cytosine dinucleotide as cofactor.

It carries out the reaction 6-hydroxypseudooxynicotine + A + H2O = 2,6-dihydroxypseudooxynicotine + AH2. The protein operates within alkaloid degradation; nicotine degradation. Functionally, molybdo-flavoprotein enzyme complex involved in nicotine degradation. The subunit gamma (large subunit) contains the substrate-binding sites, the subunit alpha (medium subunit) binds FAD and the subunit beta (small subunit) has a 2Fe-2S ferredoxin-type domain which binds 2 2Fe-2S clusters. The protein is 6-hydroxypseudooxynicotine dehydrogenase complex subunit gamma (kdhC) of Paenarthrobacter nicotinovorans (Arthrobacter nicotinovorans).